Consider the following 140-residue polypeptide: Class I hydrophobin B (140 aa).

Residues 1–16 (MKFLAVVSLLAATALA) form the signal peptide. Disulfide bonds link Cys-42-Cys-113, Cys-50-Cys-107, Cys-51-Cys-88, and Cys-114-Cys-133. An N-linked (GlcNAc...) asparagine glycan is attached at Asn-117.

This sequence belongs to the fungal hydrophobin family. As to quaternary structure, self-assembles to form functional amyloid fibrils called rodlets. Self-assembly into fibrillar rodlets occurs spontaneously at hydrophobic:hydrophilic interfaces and the rodlets further associate laterally to form amphipathic monolayers.

It localises to the secreted. Its subcellular location is the spore wall. Its function is as follows. Aerial growth, conidiation, and dispersal of filamentous fungi in the environment rely upon a capability of their secreting small amphipathic proteins called hydrophobins (HPBs) with low sequence identity. Class I can self-assemble into an outermost layer of rodlet bundles on aerial cell surfaces, conferring cellular hydrophobicity that supports fungal growth, development and dispersal; whereas Class II form highly ordered films at water-air interfaces through intermolecular interactions but contribute nothing to the rodlet structure. RodB is a class I hydrophobin that, unlike rodA, is not required for rodlet formation. This chain is Class I hydrophobin B, found in Aspergillus fumigatus (strain ATCC MYA-4609 / CBS 101355 / FGSC A1100 / Af293) (Neosartorya fumigata).